The primary structure comprises 186 residues: Negative modulator of initiation of replication (186 aa).

The tract at residues 93–94 (AV) is interaction with DNA.

The protein belongs to the SeqA family. As to quaternary structure, homodimer. Polymerizes to form helical filaments.

The protein resides in the cytoplasm. Negative regulator of replication initiation, which contributes to regulation of DNA replication and ensures that replication initiation occurs exactly once per chromosome per cell cycle. Binds to pairs of hemimethylated GATC sequences in the oriC region, thus preventing assembly of replication proteins and re-initiation at newly replicated origins. Repression is relieved when the region becomes fully methylated. The sequence is that of Negative modulator of initiation of replication from Shewanella halifaxensis (strain HAW-EB4).